Reading from the N-terminus, the 222-residue chain is MAFVKSGWLLRQSTILKRWKKNWFDLWSDGHLIYYDDQTRQNIEDKVHMPMDCINIRTGQECRDTQPPDGKSKDCMLQIVCRDGKTISLCAESTDDCLAWKFTLQDSRTNTAYVGSAVMTDETSVVSSPPPYTAYAAPAPEQAYGYGPYGGAYPPGTQVVYAANGQAYAVPYQYPYAGLYGQQPANQVIIRERYRDNDSDLALGMLAGAATGMALGSLFWVF.

The PH domain occupies 2 to 109 (AFVKSGWLLR…WKFTLQDSRT (108 aa)). K20 serves as a coordination point for a 1,2-diacyl-sn-glycero-3-phospho-L-serine.

The protein localises to the recycling endosome membrane. Involved in retrograde transport of recycling endosomes. The protein is Pleckstrin homology domain-containing family B member 2 (PLEKHB2) of Homo sapiens (Human).